An 897-amino-acid polypeptide reads, in one-letter code: Protein SAP1 (897 aa).

Disordered stretches follow at residues 112 to 144, 195 to 219, 302 to 398, 413 to 438, and 456 to 561; these read EEPAPRNDMPSSKTYTNHSSSFTRSTEPPPVFQ, PSKPLSNNASRQHKNPIEHNDPPLK, QMSD…TKST, SKSNTKPIIKSNASSPTSSLTVPNSV, and KKVA…REEP. Positions 120 to 137 are enriched in polar residues; the sequence is MPSSKTYTNHSSSFTRST. Residues 209 to 219 are compositionally biased toward basic and acidic residues; the sequence is NPIEHNDPPLK. Residues 307 to 321 are compositionally biased toward low complexity; sequence SVTSSTSSNKSVSSS. The span at 364–380 shows a compositional bias: polar residues; that stretch reads LETSTTMDSSKIRNPQI. Positions 468 to 478 are enriched in basic residues; sequence KKSHPILKSKT. Over residues 480–496 the composition is skewed to low complexity; it reads KVPNSSSKKTSSHPSRP. Over residues 497–523 the composition is skewed to polar residues; sequence VSNSKPYSHGASQNKKPSKNQTTSMSK. The residue at position 536 (Ser-536) is a Phosphoserine. 645 to 652 lines the ATP pocket; the sequence is GPPGTGKT.

The protein belongs to the AAA ATPase family. Interacts with SPT2/SIN1.

The polypeptide is Protein SAP1 (SAP1) (Saccharomyces cerevisiae (strain ATCC 204508 / S288c) (Baker's yeast)).